The sequence spans 97 residues: Sm-like protein LSM3A (97 aa).

Serine 2 is subject to N-acetylserine. Positions 11 to 96 constitute a Sm domain; that stretch reads EPLDLIRLSI…VILVSPPLRT (86 aa).

This sequence belongs to the snRNP Sm proteins family. In terms of assembly, component of the heptameric LSM1-LSM7 complex that forms a seven-membered ring structure with a donut shape. The LSM subunits are arranged in the order LSM1, LSM2, LSM3, LSM6, LSM5, LSM7 and LSM4. Component of the heptameric LSM2-LSM8 complex that forms a seven-membered ring structure with a donut shape. The LSM subunits are arranged in the order LSM8, LSM2, LSM3, LSM6, LSM5, LSM7 and LSM4. LSM3A subunit interacts only with its two neighboring subunits, LSM2 and LSM6A or LSM6B. Expressed in roots, leaves, stems, flowers and siliques.

It localises to the cytoplasm. Its subcellular location is the nucleus. Functionally, component of LSM protein complexes, which are involved in RNA processing. Component of the cytoplasmic LSM1-LSM7 complex which is involved in mRNA degradation by promoting decapping and leading to accurate 5'-3' mRNA decay. The cytoplasmic LSM1-LSM7 complex regulates developmental gene expression by the decapping of specific development-related transcripts. Component of the nuclear LSM2-LSM8 complex which is involved splicing nuclear mRNAs. LSM2-LSM8 binds directly to the U6 small nuclear RNAs (snRNAs) and is essential for accurate splicing of selected development-related mRNAs through the stabilization of the spliceosomal U6 snRNA. Plays a critical role in the regulation of development-related gene expression. The protein is Sm-like protein LSM3A of Arabidopsis thaliana (Mouse-ear cress).